We begin with the raw amino-acid sequence, 314 residues long: MAEAADAATLTRKYKYFYETECPDLDHLRSLSVANRWLETEFPLADDAKDVARLSGAELEFYRFLFAFLSAADDLVNVNLGDLSELFTQKDILHYYIEQESIEVVHSRVYSAIQLLLFRNDAVARAGYVEGALGDPAVRRKVDWLERRVAAAESVAEKYVLMILIEGIFFSSSFAAIAYLRTHNLFVVTCQTNDLISRDEAVHTAASCCIFDNYLGGERPPPARIYELFREAWKLSASLFGCAPRGSHILDVEAISAYVEYSADRLLAAIQLPPLFGTPPPGTDFPLALMTAEKHTNFFERRSTNYTGTVINDL.

Residues Asp-73, Glu-103, and His-106 each contribute to the Fe cation site. The active site involves Tyr-110. Residues 160-180 (VLMILIEGIFFSSSFAAIAYL) form a helical membrane-spanning segment. Glu-166, Glu-200, and His-203 together coordinate Fe cation.

The protein belongs to the ribonucleoside diphosphate reductase small chain family. As to quaternary structure, heterotetramer composed of a homodimer of the large subunit (R1) and a homodimer of the small subunit (R2). Larger multisubunit protein complex are also active, composed of (R1)n(R2)n. It depends on Fe cation as a cofactor.

It localises to the host membrane. It catalyses the reaction a 2'-deoxyribonucleoside 5'-diphosphate + [thioredoxin]-disulfide + H2O = a ribonucleoside 5'-diphosphate + [thioredoxin]-dithiol. Functionally, ribonucleoside-diphosphate reductase holoenzyme provides the precursors necessary for viral DNA synthesis. Allows virus growth in non-dividing cells, as well as reactivation from latency in infected hosts. Catalyzes the biosynthesis of deoxyribonucleotides from the corresponding ribonucleotides. This chain is Ribonucleoside-diphosphate reductase small subunit, found in Bovine herpesvirus 1.1 (strain Cooper) (BoHV-1).